The primary structure comprises 513 residues: Autophagy-related protein 18 (513 aa).

One copy of the WD 1 repeat lies at 2–40 (SDLPIINFINFNQNGTCISIGTSQGFKIFNCEPFGRFYQ). The tract at residues 167 to 225 (NNINIKKSDAAEDPLRKDHFAYDPSDHSHPQSTTESTSNNHNRTYSSGNNNNTNSNPNK) is disordered. Over residues 172–195 (KKSDAAEDPLRKDHFAYDPSDHSH) the composition is skewed to basic and acidic residues. Residues 205-225 (NNHNRTYSSGNNNNTNSNPNK) are compositionally biased toward low complexity. One copy of the WD 2 repeat lies at 248 to 288 (AHKGEIAALKLSADGTLLATASEKGTIIRVFNVENGSKVYQ). The segment at 289–292 (FRRG) is necessary for proper localization to vacuole membrane. A L/FRRG motif motif is present at residues 289–293 (FRRGT). A WD 3 repeat occupies 293–332 (TYSTKISSLSFSKDNQFLAVCSSSKTVHIFKLGEKIIDNT). The disordered stretch occupies residues 333 to 398 (KPNELNSDDD…TVGRMIRKSS (66 aa)). Residues 338–369 (NSDDDMDDDLLPQFENGDDEEEVDEETLDEEA) are compositionally biased toward acidic residues.

This sequence belongs to the WD repeat PROPPIN family. As to quaternary structure, component of the PI(3,5)P2 regulatory complex. Interacts with ATG2 and ATG9. The ATG2-ATG18 complex is essential for autophagosome formation.

Its subcellular location is the preautophagosomal structure membrane. The protein localises to the vacuole membrane. The protein resides in the endosome membrane. Its function is as follows. Component of the PI(3,5)P2 regulatory complex that regulates both the synthesis and turnover of phosphatidylinositol 3,5-bisphosphate (PtdIns(3,5)P2). Plays an important role in osmotically-induced vacuole fragmentation. Required for cytoplasm to vacuole transport (Cvt) vesicle formation, pexophagy and starvation-induced autophagy. Involved in correct ATG9 trafficking to the pre-autophagosomal structure. With ATG2, protects ATG8 from ATG4-mediated cleavage. The protein is Autophagy-related protein 18 of Kluyveromyces marxianus (strain DMKU3-1042 / BCC 29191 / NBRC 104275) (Yeast).